The primary structure comprises 366 residues: Phospho-N-acetylmuramoyl-pentapeptide-transferase (366 aa).

10 helical membrane passes run 27-47, 71-91, 93-113, 134-154, 174-194, 205-225, 245-265, 268-288, 294-314, and 343-363; these read AALFTSALIVFLFGPTIINSL, TPTMGGLMILAGIVGASLLWA, LSNVYVVATLLVTLGFGAIGF, LGIEFIIAGIAVYFMMRTALA, FLINLGIMFVVFGGFVIVGAG, GLAIVPVMIAAASFGVIAYLA, LAVVLGAVIGAGLGFLWFNAP, AIFMGDTGSLALGGTIGTVAV, IVMAIIGGLFVMETLSVIIQV, and QVVIRFWIIAVGLALLGLSTL.

This sequence belongs to the glycosyltransferase 4 family. MraY subfamily. It depends on Mg(2+) as a cofactor.

The protein localises to the cell inner membrane. The catalysed reaction is UDP-N-acetyl-alpha-D-muramoyl-L-alanyl-gamma-D-glutamyl-meso-2,6-diaminopimeloyl-D-alanyl-D-alanine + di-trans,octa-cis-undecaprenyl phosphate = di-trans,octa-cis-undecaprenyl diphospho-N-acetyl-alpha-D-muramoyl-L-alanyl-D-glutamyl-meso-2,6-diaminopimeloyl-D-alanyl-D-alanine + UMP. The protein operates within cell wall biogenesis; peptidoglycan biosynthesis. Functionally, catalyzes the initial step of the lipid cycle reactions in the biosynthesis of the cell wall peptidoglycan: transfers peptidoglycan precursor phospho-MurNAc-pentapeptide from UDP-MurNAc-pentapeptide onto the lipid carrier undecaprenyl phosphate, yielding undecaprenyl-pyrophosphoryl-MurNAc-pentapeptide, known as lipid I. This chain is Phospho-N-acetylmuramoyl-pentapeptide-transferase, found in Rhizobium etli (strain CIAT 652).